Consider the following 276-residue polypeptide: MDAGDASRLGESLDAVSAAFQSRVMELQELVLARNMYPATAIPDLAAVDVSLTAMEAQLQAVRRRLQEEREAFPKAKKLVQQSLKQQRRLQLMLANMPTGMREDVFATPLEHNSSMMFPESLNFSSAVPEVRDHDLKIKEEPTAPPKKGRGPAPRWYISTEELDSLSSYMRGRLTLEKVNIAINEVASYADGNAHLVACPKKKLSEDTWEKALELRDIAARESVKGRHFFLETDIKGPGLKLDTTGKAILTVLRHLGRFQETRIGHHRVFILSKQQ.

The stretch at 48 to 78 (VDVSLTAMEAQLQAVRRRLQEEREAFPKAKK) forms a coiled coil.

Belongs to the SKA1 family.

The polypeptide is SKA complex subunit 1 homolog (Oryza sativa subsp. japonica (Rice)).